The following is a 181-amino-acid chain: Probable pyruvoyl-dependent arginine decarboxylase (181 aa).

S43 is subject to Pyruvic acid (Ser).

The protein belongs to the PdaD family. Pyruvate is required as a cofactor.

It carries out the reaction L-arginine + H(+) = agmatine + CO2. The polypeptide is Probable pyruvoyl-dependent arginine decarboxylase (Chlorobium phaeobacteroides (strain BS1)).